The chain runs to 222 residues: Cytochrome b6 (222 aa).

A helical transmembrane segment spans residues 39–59; that stretch reads IFYCLGGITLTCFIIQFATGF. Residue Cys42 coordinates heme c. Heme b-binding residues include His93 and His107. The next 3 helical transmembrane spans lie at 97–117, 123–143, and 193–213; these read ASMM…TGGF, LTWI…VTGY, and LHTF…FLMI. Residues His194 and His209 each contribute to the heme b site.

It belongs to the cytochrome b family. PetB subfamily. As to quaternary structure, the 4 large subunits of the cytochrome b6-f complex are cytochrome b6, subunit IV (17 kDa polypeptide, PetD), cytochrome f and the Rieske protein, while the 4 small subunits are PetG, PetL, PetM and PetN. The complex functions as a dimer. Heme b serves as cofactor. Heme c is required as a cofactor.

The protein localises to the cellular thylakoid membrane. Its function is as follows. Component of the cytochrome b6-f complex, which mediates electron transfer between photosystem II (PSII) and photosystem I (PSI), cyclic electron flow around PSI, and state transitions. The polypeptide is Cytochrome b6 (petB) (Picosynechococcus sp. (strain ATCC 27264 / PCC 7002 / PR-6) (Agmenellum quadruplicatum)).